The primary structure comprises 252 residues: MIKKRIIPCLDVKDGRVVKGIQFKGLRDIGNPVDLAMYYNEAGADELVFLDISKTEEGHSLMLEVIEQTASRLFIPLTVGGGIQSLDDITQLLNHGADKVSLNSSALKNPQLIKQASDKFGRQCICIAIDSYYDPERKAHYCCTHGGKKMTNIKVYDWVQQVEQLGAGELLVTSMGHDGMKQGFDIEHLAKIKSLVNIPIIASGGGGNAQHFVELFDQTDVSAGLAASILHDRETTVQSIKEVIRQGGIAVR.

Catalysis depends on residues Asp-11 and Asp-130.

This sequence belongs to the HisA/HisF family. As to quaternary structure, heterodimer of HisH and HisF.

It localises to the cytoplasm. It catalyses the reaction 5-[(5-phospho-1-deoxy-D-ribulos-1-ylimino)methylamino]-1-(5-phospho-beta-D-ribosyl)imidazole-4-carboxamide + L-glutamine = D-erythro-1-(imidazol-4-yl)glycerol 3-phosphate + 5-amino-1-(5-phospho-beta-D-ribosyl)imidazole-4-carboxamide + L-glutamate + H(+). Its pathway is amino-acid biosynthesis; L-histidine biosynthesis; L-histidine from 5-phospho-alpha-D-ribose 1-diphosphate: step 5/9. In terms of biological role, IGPS catalyzes the conversion of PRFAR and glutamine to IGP, AICAR and glutamate. The HisF subunit catalyzes the cyclization activity that produces IGP and AICAR from PRFAR using the ammonia provided by the HisH subunit. This Staphylococcus aureus (strain bovine RF122 / ET3-1) protein is Imidazole glycerol phosphate synthase subunit HisF.